The chain runs to 262 residues: Ninja-family protein 2 (262 aa).

A disordered region spans residues 49 to 70; sequence RNSLACNTSKEAAGQSPKEMNA.

Belongs to the Ninja family.

The protein resides in the nucleus. The protein is Ninja-family protein 2 of Zea mays (Maize).